The sequence spans 314 residues: DNA-directed RNA polymerase subunit alpha (314 aa).

Positions 1 to 228 (MIEIEKPKIE…EHLNIFVGLT (228 aa)) are alpha N-terminal domain (alpha-NTD). Residues 246 to 314 (EKVLEMTIEE…ELGLGLRKDD (69 aa)) are alpha C-terminal domain (alpha-CTD).

This sequence belongs to the RNA polymerase alpha chain family. Homodimer. The RNAP catalytic core consists of 2 alpha, 1 beta, 1 beta' and 1 omega subunit. When a sigma factor is associated with the core the holoenzyme is formed, which can initiate transcription.

It catalyses the reaction RNA(n) + a ribonucleoside 5'-triphosphate = RNA(n+1) + diphosphate. Its function is as follows. DNA-dependent RNA polymerase catalyzes the transcription of DNA into RNA using the four ribonucleoside triphosphates as substrates. This Bacillus pumilus (strain SAFR-032) protein is DNA-directed RNA polymerase subunit alpha.